The sequence spans 174 residues: uncharacterized protein (174 aa).

Belongs to the mimivirus L39/R874 family.

This is an uncharacterized protein from Acanthamoeba polyphaga (Amoeba).